A 182-amino-acid chain; its full sequence is Mid1-interacting protein 1 (182 aa).

An N-acetylmethionine modification is found at M1. The interval 55 to 75 (VGGSGGCLEERTTPAPSPGSA) is disordered. Phosphoserine occurs at positions 71, 74, and 78.

Belongs to the SPOT14 family. As to quaternary structure, homodimer in the absence of THRSP. Heterodimer with THRSP. The homodimer interacts with ACACA and ACACB. Promotes polymerization of Acetyl-CoA carboxylase to form complexes that contain MID1IP1 and ACACA and/or ACACB. Interaction with THRSP interferes with ACACA binding. During embryonic development, expressed mainly in the neuroepithelial midline, urogenital apparatus and digits. Detected in adult white fat, liver, heart, brain and kidney. Expressed at very low levels in lactating mammary gland.

It localises to the nucleus. Its subcellular location is the cytoplasm. It is found in the cytoskeleton. Functionally, plays a role in the regulation of lipogenesis in liver. Up-regulates ACACA enzyme activity. Required for efficient lipid biosynthesis, including triacylglycerol, diacylglycerol and phospholipid. Involved in stabilization of microtubules. The chain is Mid1-interacting protein 1 (Mid1ip1) from Mus musculus (Mouse).